A 373-amino-acid polypeptide reads, in one-letter code: L-threonine 3-dehydrogenase, mitochondrial (373 aa).

NAD(+) contacts are provided by residues 62–67, 88–90, 106–107, Tyr-195, Lys-199, and Ile-225; these read GGLGQL, DIR, and NI. Catalysis depends on Tyr-195, which acts as the Proton donor/acceptor.

The protein belongs to the NAD(P)-dependent epimerase/dehydratase family. Homodimer.

The protein resides in the mitochondrion. It catalyses the reaction L-threonine + NAD(+) = (2S)-2-amino-3-oxobutanoate + NADH + H(+). The protein operates within amino-acid degradation; L-threonine degradation via oxydo-reductase pathway; glycine from L-threonine: step 1/2. Catalyzes the NAD(+)-dependent oxidation of L-threonine to 2-amino-3-ketobutyrate, mediating L-threonine catabolism. The chain is L-threonine 3-dehydrogenase, mitochondrial from Mus musculus (Mouse).